Consider the following 94-residue polypeptide: Large ribosomal subunit protein eL36 (94 aa).

The segment covering methionine 1–glycine 25 has biased composition (basic residues). Residues methionine 1–threonine 30 are disordered.

The protein belongs to the eukaryotic ribosomal protein eL36 family. Component of the large ribosomal subunit.

The protein localises to the cytoplasm. This is Large ribosomal subunit protein eL36 (RPL36) from Encephalitozoon cuniculi (strain GB-M1) (Microsporidian parasite).